We begin with the raw amino-acid sequence, 88 residues long: uncharacterized protein (88 aa).

A signal peptide spans 1-22 (MGLTLKEHAEVCMALAESSASA).

This is an uncharacterized protein from Haemophilus influenzae (strain ATCC 51907 / DSM 11121 / KW20 / Rd).